A 180-amino-acid polypeptide reads, in one-letter code: ATP synthase subunit delta (180 aa).

This sequence belongs to the ATPase delta chain family. F-type ATPases have 2 components, F(1) - the catalytic core - and F(0) - the membrane proton channel. F(1) has five subunits: alpha(3), beta(3), gamma(1), delta(1), epsilon(1). F(0) has three main subunits: a(1), b(2) and c(10-14). The alpha and beta chains form an alternating ring which encloses part of the gamma chain. F(1) is attached to F(0) by a central stalk formed by the gamma and epsilon chains, while a peripheral stalk is formed by the delta and b chains.

It localises to the cell membrane. In terms of biological role, f(1)F(0) ATP synthase produces ATP from ADP in the presence of a proton or sodium gradient. F-type ATPases consist of two structural domains, F(1) containing the extramembraneous catalytic core and F(0) containing the membrane proton channel, linked together by a central stalk and a peripheral stalk. During catalysis, ATP synthesis in the catalytic domain of F(1) is coupled via a rotary mechanism of the central stalk subunits to proton translocation. This protein is part of the stalk that links CF(0) to CF(1). It either transmits conformational changes from CF(0) to CF(1) or is implicated in proton conduction. This is ATP synthase subunit delta from Caldicellulosiruptor bescii (strain ATCC BAA-1888 / DSM 6725 / KCTC 15123 / Z-1320) (Anaerocellum thermophilum).